Reading from the N-terminus, the 301-residue chain is NAD kinase 2 (301 aa).

Asp77 serves as the catalytic Proton acceptor. Residues 77–78 (DG), Arg82, 151–152 (NE), Lys162, Asp181, and 192–197 (TAYAFS) each bind NAD(+).

This sequence belongs to the NAD kinase family. It depends on a divalent metal cation as a cofactor.

It is found in the cytoplasm. It carries out the reaction NAD(+) + ATP = ADP + NADP(+) + H(+). Its function is as follows. Involved in the regulation of the intracellular balance of NAD and NADP, and is a key enzyme in the biosynthesis of NADP. Catalyzes specifically the phosphorylation on 2'-hydroxyl of the adenosine moiety of NAD to yield NADP. The protein is NAD kinase 2 of Streptomyces coelicolor (strain ATCC BAA-471 / A3(2) / M145).